The following is a 118-amino-acid chain: Transcription factor PAR2 (118 aa).

The tract at residues 1–59 (MEKTLATSHTKRSSPPSPSSAVNTSSTGFNRRTRQRLSDATASVSETDVEDEDEDEEGV) is disordered. The span at 19-30 (SSAVNTSSTGFN) shows a compositional bias: polar residues. The region spanning 43–92 (SVSETDVEDEDEDEEGVEEKIEALQTIVPGGTELGVDALFEETASYILAL) is the bHLH domain. Acidic residues predominate over residues 47-59 (TDVEDEDEDEEGV).

The protein belongs to the bHLH protein family. Homodimer.

It is found in the nucleus. Atypical bHLH transcription factor that acts as a negative regulator of a variety of shade avoidance syndrome (SAS) responses, including seedling elongation and photosynthetic pigment accumulation. Acts as a direct transcriptional repressor of two auxin-responsive genes, SAUR15 and SAUR68. May function in integrating shade and hormone transcriptional networks in response to light and auxin changes. The polypeptide is Transcription factor PAR2 (PAR2) (Arabidopsis thaliana (Mouse-ear cress)).